The chain runs to 387 residues: Carbamoyl phosphate synthase small chain (387 aa).

Positions 1 to 189 (MIKSAILVLE…GLPEDKQEQD (189 aa)) are CPSase. L-glutamine contacts are provided by Ser-47, Gly-241, and Gly-243. A Glutamine amidotransferase type-1 domain is found at 193 to 380 (HVVAYDFGAK…IELIEQYCQK (188 aa)). The Nucleophile role is filled by Cys-269. L-glutamine contacts are provided by Leu-270, Gln-273, Asn-311, Gly-313, and Phe-314. Active-site residues include His-353 and Glu-355.

The protein belongs to the CarA family. Composed of two chains; the small (or glutamine) chain promotes the hydrolysis of glutamine to ammonia, which is used by the large (or ammonia) chain to synthesize carbamoyl phosphate. Tetramer of heterodimers (alpha,beta)4.

The enzyme catalyses hydrogencarbonate + L-glutamine + 2 ATP + H2O = carbamoyl phosphate + L-glutamate + 2 ADP + phosphate + 2 H(+). It catalyses the reaction L-glutamine + H2O = L-glutamate + NH4(+). It functions in the pathway amino-acid biosynthesis; L-arginine biosynthesis; carbamoyl phosphate from bicarbonate: step 1/1. Its pathway is pyrimidine metabolism; UMP biosynthesis via de novo pathway; (S)-dihydroorotate from bicarbonate: step 1/3. Its function is as follows. Small subunit of the glutamine-dependent carbamoyl phosphate synthetase (CPSase). CPSase catalyzes the formation of carbamoyl phosphate from the ammonia moiety of glutamine, carbonate, and phosphate donated by ATP, constituting the first step of 2 biosynthetic pathways, one leading to arginine and/or urea and the other to pyrimidine nucleotides. The small subunit (glutamine amidotransferase) binds and cleaves glutamine to supply the large subunit with the substrate ammonia. This Photorhabdus laumondii subsp. laumondii (strain DSM 15139 / CIP 105565 / TT01) (Photorhabdus luminescens subsp. laumondii) protein is Carbamoyl phosphate synthase small chain.